Reading from the N-terminus, the 251-residue chain is MVRRRVIPCLLLKDRGLVKTVKFKEPKYVGDPINAIRIFNEKEVDELILLDIDASRLNQEPNYELIAEVAGECFMPICYGGGIKTLEHAEKIFSLGVEKVSINTAALMDLSLIRRIADKFGSQSVVGSIDCRKGFWGGHSVFSENGTRDMKRSPLEWAQALEEAGVGEIFLNSIDRDGVQKGFDNALVENIASNVHVPVIACGGAGSIADLIDLFERTCVSAVAAGSLFVFHGKHRAVLISYPDVNKLDVG.

Asp-130 is a catalytic residue.

Belongs to the HisA/HisF family. As to quaternary structure, heterodimer of HisH and HisF.

The protein localises to the cytoplasm. The catalysed reaction is 5-[(5-phospho-1-deoxy-D-ribulos-1-ylimino)methylamino]-1-(5-phospho-beta-D-ribosyl)imidazole-4-carboxamide + L-glutamine = D-erythro-1-(imidazol-4-yl)glycerol 3-phosphate + 5-amino-1-(5-phospho-beta-D-ribosyl)imidazole-4-carboxamide + L-glutamate + H(+). The protein operates within amino-acid biosynthesis; L-histidine biosynthesis; L-histidine from 5-phospho-alpha-D-ribose 1-diphosphate: step 5/9. In terms of biological role, IGPS catalyzes the conversion of PRFAR and glutamine to IGP, AICAR and glutamate. The HisF subunit catalyzes the cyclization activity that produces IGP and AICAR from PRFAR using the ammonia provided by the HisH subunit. This Pseudomonas aeruginosa (strain ATCC 15692 / DSM 22644 / CIP 104116 / JCM 14847 / LMG 12228 / 1C / PRS 101 / PAO1) protein is Putative imidazole glycerol phosphate synthase subunit hisF2 (hisF2).